The sequence spans 256 residues: Kallikrein 1-related peptidase-like b4 (256 aa).

The N-terminal stretch at 1-17 is a signal peptide; sequence MWFLILFLALSLGGIDA. Positions 18–24 are activation peptide homolog; it reads APPVQSQ. Positions 18–253 constitute a Peptidase S1 domain; sequence APPVQSQVDC…FSSWIRETMA (236 aa). Cysteine 45 and cysteine 61 are joined by a disulfide. Zn(2+) contacts are provided by glutamate 77 and histidine 84. Cystine bridges form between cysteine 147/cysteine 214, cysteine 179/cysteine 193, and cysteine 204/cysteine 229.

This sequence belongs to the peptidase S1 family. Kallikrein subfamily. In terms of assembly, 7S nerve growth factor is composed of two alpha chains, a beta dimer composed of identical chains, and two gamma chains. Zn(2+) serves as cofactor. In terms of processing, the presence of Gln-24 prevents cleavage of the activation peptide, which remains attached at the amino end of the mature alpha chain.

This chain is Kallikrein 1-related peptidase-like b4 (Klk1b4), found in Mus musculus (Mouse).